Consider the following 356-residue polypeptide: Histidinol-phosphate aminotransferase (356 aa).

K214 is modified (N6-(pyridoxal phosphate)lysine).

It belongs to the class-II pyridoxal-phosphate-dependent aminotransferase family. Histidinol-phosphate aminotransferase subfamily. Homodimer. Requires pyridoxal 5'-phosphate as cofactor.

The enzyme catalyses L-histidinol phosphate + 2-oxoglutarate = 3-(imidazol-4-yl)-2-oxopropyl phosphate + L-glutamate. The protein operates within amino-acid biosynthesis; L-histidine biosynthesis; L-histidine from 5-phospho-alpha-D-ribose 1-diphosphate: step 7/9. This chain is Histidinol-phosphate aminotransferase, found in Escherichia coli O127:H6 (strain E2348/69 / EPEC).